A 134-amino-acid polypeptide reads, in one-letter code: MENKKTIYFLCTGNSCRSQMAEAWGKQYLGDKWNVYSAGIEAHGVNPNAIKAMNEVNIDITNQTSDIIDANILNRADLVVTLCSHADAVCPSTPPHVNRVHWGFDDPAGKEWPEFQRVRDEIGERIKRFSETGE.

Active-site nucleophile residues include cysteine 11, cysteine 83, and cysteine 90. 2 cysteine pairs are disulfide-bonded: cysteine 11/cysteine 83 and cysteine 83/cysteine 90.

Belongs to the low molecular weight phosphotyrosine protein phosphatase family. Thioredoxin-coupled ArsC subfamily.

It is found in the cytoplasm. It catalyses the reaction arsenate + [thioredoxin]-dithiol + H(+) = arsenite + [thioredoxin]-disulfide + H2O. Catalyzes the reduction of arsenate [As(V)] to arsenite [As(III)]. In Bacillus anthracis (strain A0248), this protein is Arsenate reductase.